A 475-amino-acid chain; its full sequence is Aspartyl/glutamyl-tRNA(Asn/Gln) amidotransferase subunit B (475 aa).

The protein belongs to the GatB/GatE family. GatB subfamily. Heterotrimer of A, B and C subunits.

The catalysed reaction is L-glutamyl-tRNA(Gln) + L-glutamine + ATP + H2O = L-glutaminyl-tRNA(Gln) + L-glutamate + ADP + phosphate + H(+). It carries out the reaction L-aspartyl-tRNA(Asn) + L-glutamine + ATP + H2O = L-asparaginyl-tRNA(Asn) + L-glutamate + ADP + phosphate + 2 H(+). In terms of biological role, allows the formation of correctly charged Asn-tRNA(Asn) or Gln-tRNA(Gln) through the transamidation of misacylated Asp-tRNA(Asn) or Glu-tRNA(Gln) in organisms which lack either or both of asparaginyl-tRNA or glutaminyl-tRNA synthetases. The reaction takes place in the presence of glutamine and ATP through an activated phospho-Asp-tRNA(Asn) or phospho-Glu-tRNA(Gln). The polypeptide is Aspartyl/glutamyl-tRNA(Asn/Gln) amidotransferase subunit B (Staphylococcus haemolyticus (strain JCSC1435)).